The sequence spans 60 residues: Large ribosomal subunit protein uL30 (60 aa).

Belongs to the universal ribosomal protein uL30 family. Part of the 50S ribosomal subunit.

The polypeptide is Large ribosomal subunit protein uL30 (Shewanella sp. (strain ANA-3)).